Here is a 127-residue protein sequence, read N- to C-terminus: Mitochondrial pyruvate carrier 2 (127 aa).

At 2–40 the chain is on the mitochondrial matrix side; it reads SAAGARGLRATYHRLLDKVELMLPEKLRPLYNHPAGPRT. Residues 41 to 61 traverse the membrane as a helical segment; that stretch reads VFFWAPIMKRGLVCAGLADMA. Residues 62–72 lie on the Mitochondrial intermembrane side of the membrane; it reads RPAEKLSTAQS. Residues 73–90 traverse the membrane as a helical segment; the sequence is AVLMATGFIWSRYSLVII. The Mitochondrial matrix segment spans residues 91–95; it reads PKNWS. The helical transmembrane segment at 96 to 115 threads the bilayer; sequence LFAVNFFVGAAGASQLFRIW. Over 116–127 the chain is Mitochondrial intermembrane; sequence RYNQELKAKAHK.

The protein belongs to the mitochondrial pyruvate carrier (MPC) (TC 2.A.105) family. As to quaternary structure, homodimer. Homooligomer. Forms heterodimers with MPC1 and MPC1L. The heterodimer is the more stable and dominant form.

The protein resides in the mitochondrion inner membrane. It carries out the reaction pyruvate(out) + H(+)(out) = pyruvate(in) + H(+)(in). Functionally, mediates the uptake of pyruvate into mitochondria. This Pongo abelii (Sumatran orangutan) protein is Mitochondrial pyruvate carrier 2 (MPC2).